The sequence spans 341 residues: Tryptophan--tRNA ligase (341 aa).

Residues 11–13 and 19–20 each bind ATP; these read RPT and GH. The short motif at 12–20 is the 'HIGH' region element; that stretch reads PTGKLHIGH. Aspartate 140 contributes to the L-tryptophan binding site. ATP is bound by residues 152-154, leucine 194, and 202-206; these read GTD and KMSKS. Residues 202-206 carry the 'KMSKS' region motif; the sequence is KMSKS.

It belongs to the class-I aminoacyl-tRNA synthetase family. Homodimer.

The protein localises to the cytoplasm. It carries out the reaction tRNA(Trp) + L-tryptophan + ATP = L-tryptophyl-tRNA(Trp) + AMP + diphosphate + H(+). Functionally, catalyzes the attachment of tryptophan to tRNA(Trp). The sequence is that of Tryptophan--tRNA ligase from Streptococcus agalactiae serotype III (strain NEM316).